Here is a 716-residue protein sequence, read N- to C-terminus: Polyribonucleotide nucleotidyltransferase (716 aa).

Residues Asp-485 and Asp-491 each contribute to the Mg(2+) site. The KH domain occupies 552 to 611 (PKITTISVPKEKIRDVIGSGGKVIREIVEYSGAKVDIGDDGTVTIAASNDEQAQKAIARI). In terms of domain architecture, S1 motif spans 621 to 689 (GRIYEGKVVK…DRGKVKLSMR (69 aa)).

Belongs to the polyribonucleotide nucleotidyltransferase family. Mg(2+) is required as a cofactor.

The protein resides in the cytoplasm. It carries out the reaction RNA(n+1) + phosphate = RNA(n) + a ribonucleoside 5'-diphosphate. Involved in mRNA degradation. Catalyzes the phosphorolysis of single-stranded polyribonucleotides processively in the 3'- to 5'-direction. This chain is Polyribonucleotide nucleotidyltransferase, found in Gluconobacter oxydans (strain 621H) (Gluconobacter suboxydans).